The primary structure comprises 338 residues: tRNA(Ile)-lysidine synthase (338 aa).

ATP is bound at residue 23–28 (SGGLDS).

Belongs to the tRNA(Ile)-lysidine synthase family.

Its subcellular location is the cytoplasm. It carries out the reaction cytidine(34) in tRNA(Ile2) + L-lysine + ATP = lysidine(34) in tRNA(Ile2) + AMP + diphosphate + H(+). Its function is as follows. Ligates lysine onto the cytidine present at position 34 of the AUA codon-specific tRNA(Ile) that contains the anticodon CAU, in an ATP-dependent manner. Cytidine is converted to lysidine, thus changing the amino acid specificity of the tRNA from methionine to isoleucine. The polypeptide is tRNA(Ile)-lysidine synthase (Helicobacter pylori (strain J99 / ATCC 700824) (Campylobacter pylori J99)).